Consider the following 1356-residue polypeptide: MAYSYTEKKRIRKDFSKLPHVMDVPYLLAIQLDSYREFLQAGATKDQFRDIGLHAAFKSVFPIISYSGNAALEYVGYRLGEPAFDVKECVLRGVTFAVPLRVKVRLIIFDKESSNKAIKDIKEQEVYMGEIPLMTENGTFIINGTERVIVSQLHRSPGVFFDHDRGKTHSSGKLLYSARIIPYRGSWLDFEFDPKDAVFVRIDRRRKLPASVLLRALNYSTEEILDAFYDTNVFHVKGETLALELVPQRLRGEIATFDIKDDSGKVIVEQGRRITARHINQLDKSGIKELEMPMDYVLGRTVAKAIVHPATGEIIAECNTELTVDVMAKIVKAQVVRFETLYTNDIDCGPFISDTLKIDSTTNQLEALVEIYRMMRPGEPPTKDAAETLFNNLFFAAERYDLSAVGRMKFNRRIGRTEIEGSGVLSREDIVAVLKTLVDIRNGKGIVDDIDHLGNRRVRCVGEMAENQFRVGLVRVERAVKERLSMAESEGLMPQDLINAKPVAAAVKEFFGSSQLSQFMDQNNPLSEITHKRRVSALGPGGLTRERAGFEVRDVHPTHYGRVCPIETPEGPNIGLINSLAAYARTNQYGFLESPYRVVKDGEVTDEIVFLSAIEEADHVIAQASAKLDGRKLVDELVAVRHLNEFTVKAPEDVTLMDVSPKQVVSVAASLIPFLEHDDANRALMGSNMQRQAVPTLRSDKPLVGTGMERNVARDSGVCVVARRGGVIDSVDASRIVVRVRDDEVETGEAGVDIYNLTKYTRSNQNTCINQRPLVRKGDVVARGDIMADGPSTDMGELALGQNMRVAFMPWNGYNFEDSILLSERVVQEDRFTTIHIQELTCVSRDTKLGPEEITADIPNVGEAALNKLDEAGIVYVGAEVGPGDILVGKVTPKGETQLTPEEKLLRAIFGEKASDVKDTSLRVPTGTKGTVIDVQVFIRDGVERDSRALAIEKMQLDEIRKDLNEEFRIVEGATFERLRSALVGATAEGGAGLKKGVVITDEILDGLEHGQWFKLRMAEDALNEQLEKAQAYLSDRRQLLDDKFEDKKRKLQQGDDLAPGVLKIVKVYLAIKRRIQPGDKMAGRHGNKGVVSVIMPVEDMPHDANGTPVDIVLNPLGVPSRMNVGQILETHLGLAAKGLGEKINLMLEEQRKVAELRKFLHEIYNEIGGRQENLDDLSDQEVLDLANNLRKGVPMATPVFDGAKEREIKAMLKLADLPESGQMQLFDGRTGNAFERTTTVGYMYMLKLNHLVDDKMHARSTGSYSLVTQQPLGGKAQFGGQRFGEMEVWALEAYGAAYTLQEMLTVKSDDVNGRTKMYKNIVDGDHRMEAGMPESFNVLIKEIRSLGIDIDLETE.

This sequence belongs to the RNA polymerase beta chain family. The RNAP catalytic core consists of 2 alpha, 1 beta, 1 beta' and 1 omega subunit. When a sigma factor is associated with the core the holoenzyme is formed, which can initiate transcription.

The catalysed reaction is RNA(n) + a ribonucleoside 5'-triphosphate = RNA(n+1) + diphosphate. Its function is as follows. DNA-dependent RNA polymerase catalyzes the transcription of DNA into RNA using the four ribonucleoside triphosphates as substrates. The sequence is that of DNA-directed RNA polymerase subunit beta from Stutzerimonas stutzeri (strain A1501) (Pseudomonas stutzeri).